We begin with the raw amino-acid sequence, 427 residues long: MANLLETSIFFSSADKLLSFPPKNSQTHHLPFSAFINGGRKIRKSSTITFATDTVTYNGTTSAEVKSSVEDPMEVEVAEGYTMAQFCDKIIDLFLNEKPKVKQWKTYLVLRDEWNKYSVNFYKRCRIRADTETDPILKQKLVSLESKVKKIDKEMEKHNDLLKEIQENPTDINAIAAKRRRDFTGEFFRYVTLLSETLDGLEDRDAVARLATRCLSAVSAYDNTLESVETLDTAQAKFEDILNSPSVDSACEKIRSLAKAKELDSSLILLINSAYAAAKESQTVTNEAKDIMYHLYKATKSSLRSITPKEIKLLKYLLNITDPEERFSALATAFSPGDDHEAKDPKALYTTPKELHKWIKIMLDAYHLNKEETDIKEAKQMSQPIVIQRLFILKDTIEDEYLDKKTIVADETPKKEEEDTTIEDFLN.

Residues 135 to 168 (PILKQKLVSLESKVKKIDKEMEKHNDLLKEIQEN) are a coiled coil.

This is an uncharacterized protein from Arabidopsis thaliana (Mouse-ear cress).